A 595-amino-acid chain; its full sequence is FERM domain-containing protein 3 (595 aa).

An FERM domain is found at 32-312 (MKCTIRLLDD…ENQAFYKYAK (281 aa)). Residues 529 to 549 (LLVVGLGLLLFVFPLLLLLLE) form a helical membrane-spanning segment.

It localises to the membrane. Functionally, putative tumor suppressor gene that may be implicated in the origin and progression of lung cancer. This Mus musculus (Mouse) protein is FERM domain-containing protein 3 (Frmd3).